Reading from the N-terminus, the 110-residue chain is Minor capsid protein VP2 (110 aa).

It belongs to the vesivirus VP2 protein family. In terms of assembly, homooligomer. The portal-like structure consists in 12 copies of VP2. Interacts with capsid protein VP1.

Its subcellular location is the virion. The protein localises to the host cytoplasm. In terms of biological role, minor structural protein that forms a portal-like structure at a unique three-fold axis of symmetry, following binding to the host receptor. The channel formed by VP2 may allow the delivery of the viral genome through the host endosomal membrane. In Vesicular exanthema of swine virus serotype A48 (isolate Swine/United States/A48/1948) (VESV), this protein is Minor capsid protein VP2.